The primary structure comprises 273 residues: Formamidopyrimidine-DNA glycosylase (273 aa).

Catalysis depends on proline 2, which acts as the Schiff-base intermediate with DNA. Glutamate 3 acts as the Proton donor in catalysis. Catalysis depends on lysine 58, which acts as the Proton donor; for beta-elimination activity. The DNA site is built by histidine 92, arginine 111, and lysine 153. The segment at 238 to 272 (MVYARDGQECLSCSSSIIKTKHSGRSTFYCKSCQK) adopts an FPG-type zinc-finger fold. Catalysis depends on arginine 262, which acts as the Proton donor; for delta-elimination activity.

It belongs to the FPG family. In terms of assembly, monomer. Requires Zn(2+) as cofactor.

It catalyses the reaction Hydrolysis of DNA containing ring-opened 7-methylguanine residues, releasing 2,6-diamino-4-hydroxy-5-(N-methyl)formamidopyrimidine.. The enzyme catalyses 2'-deoxyribonucleotide-(2'-deoxyribose 5'-phosphate)-2'-deoxyribonucleotide-DNA = a 3'-end 2'-deoxyribonucleotide-(2,3-dehydro-2,3-deoxyribose 5'-phosphate)-DNA + a 5'-end 5'-phospho-2'-deoxyribonucleoside-DNA + H(+). Involved in base excision repair of DNA damaged by oxidation or by mutagenic agents. Acts as a DNA glycosylase that recognizes and removes damaged bases. Has a preference for oxidized purines, such as 7,8-dihydro-8-oxoguanine (8-oxoG). Has AP (apurinic/apyrimidinic) lyase activity and introduces nicks in the DNA strand. Cleaves the DNA backbone by beta-delta elimination to generate a single-strand break at the site of the removed base with both 3'- and 5'-phosphates. The polypeptide is Formamidopyrimidine-DNA glycosylase (Rickettsia bellii (strain OSU 85-389)).